Here is a 359-residue protein sequence, read N- to C-terminus: Nicotinate-nucleotide--dimethylbenzimidazole phosphoribosyltransferase (359 aa).

The Proton acceptor role is filled by glutamate 318.

This sequence belongs to the CobT family. As to quaternary structure, homodimer.

The enzyme catalyses 5,6-dimethylbenzimidazole + nicotinate beta-D-ribonucleotide = alpha-ribazole 5'-phosphate + nicotinate + H(+). It functions in the pathway nucleoside biosynthesis; alpha-ribazole biosynthesis; alpha-ribazole from 5,6-dimethylbenzimidazole: step 1/2. In terms of biological role, catalyzes the synthesis of alpha-ribazole-5'-phosphate from nicotinate mononucleotide (NAMN) and 5,6-dimethylbenzimidazole (DMB). The sequence is that of Nicotinate-nucleotide--dimethylbenzimidazole phosphoribosyltransferase from Escherichia coli O8 (strain IAI1).